The chain runs to 369 residues: Protein-glutamate methylesterase/protein-glutamine glutaminase (369 aa).

A Response regulatory domain is found at 4–121 (KVLVVDDSSF…ARNRDEAVSL (118 aa)). A 4-aspartylphosphate modification is found at Asp-55. The span at 146–171 (ATSSARPLASRTAAPAASAPARPATT) shows a compositional bias: low complexity. Residues 146–175 (ATSSARPLASRTAAPAASAPARPATTKFRA) form a disordered region. Residues 176 to 369 (SGKKYQLTAI…ERMLVEVGLA (194 aa)) form the CheB-type methylesterase domain. Active-site residues include Ser-188, His-215, and Asp-311.

Belongs to the CheB family. Phosphorylated by CheA. Phosphorylation of the N-terminal regulatory domain activates the methylesterase activity.

The protein resides in the cytoplasm. The enzyme catalyses [protein]-L-glutamate 5-O-methyl ester + H2O = L-glutamyl-[protein] + methanol + H(+). It carries out the reaction L-glutaminyl-[protein] + H2O = L-glutamyl-[protein] + NH4(+). In terms of biological role, involved in chemotaxis. Part of a chemotaxis signal transduction system that modulates chemotaxis in response to various stimuli. Catalyzes the demethylation of specific methylglutamate residues introduced into the chemoreceptors (methyl-accepting chemotaxis proteins or MCP) by CheR. Also mediates the irreversible deamidation of specific glutamine residues to glutamic acid. This Vibrio parahaemolyticus serotype O3:K6 (strain RIMD 2210633) protein is Protein-glutamate methylesterase/protein-glutamine glutaminase.